A 255-amino-acid chain; its full sequence is uncharacterized protein (255 aa).

The signal sequence occupies residues 1 to 23; that stretch reads MKRLNKLVLGINLLFLVISITAG. The N-palmitoyl cysteine moiety is linked to residue cysteine 24. Cysteine 24 carries S-diacylglycerol cysteine lipidation.

This sequence belongs to the staphylococcal tandem lipoprotein family.

It localises to the cell membrane. This is an uncharacterized protein from Staphylococcus aureus (strain MRSA252).